We begin with the raw amino-acid sequence, 143 residues long: Large ribosomal subunit protein uL13 (143 aa).

The protein belongs to the universal ribosomal protein uL13 family. In terms of assembly, part of the 50S ribosomal subunit.

This protein is one of the early assembly proteins of the 50S ribosomal subunit, although it is not seen to bind rRNA by itself. It is important during the early stages of 50S assembly. This chain is Large ribosomal subunit protein uL13, found in Variovorax paradoxus (strain S110).